We begin with the raw amino-acid sequence, 129 residues long: Large ribosomal subunit protein uL22 (129 aa).

Belongs to the universal ribosomal protein uL22 family. As to quaternary structure, part of the 50S ribosomal subunit.

This protein binds specifically to 23S rRNA; its binding is stimulated by other ribosomal proteins, e.g. L4, L17, and L20. It is important during the early stages of 50S assembly. It makes multiple contacts with different domains of the 23S rRNA in the assembled 50S subunit and ribosome. Its function is as follows. The globular domain of the protein is located near the polypeptide exit tunnel on the outside of the subunit, while an extended beta-hairpin is found that lines the wall of the exit tunnel in the center of the 70S ribosome. The chain is Large ribosomal subunit protein uL22 from Onion yellows phytoplasma (strain OY-M).